Reading from the N-terminus, the 434-residue chain is Glutamyl-tRNA reductase (434 aa).

Substrate is bound by residues 49–52 (TCNR), Ser-109, 114–116 (EPQ), and Gln-120. Catalysis depends on Cys-50, which acts as the Nucleophile. 189-194 (GAGEMC) lines the NADP(+) pocket.

Belongs to the glutamyl-tRNA reductase family. Homodimer.

The enzyme catalyses (S)-4-amino-5-oxopentanoate + tRNA(Glu) + NADP(+) = L-glutamyl-tRNA(Glu) + NADPH + H(+). The protein operates within porphyrin-containing compound metabolism; protoporphyrin-IX biosynthesis; 5-aminolevulinate from L-glutamyl-tRNA(Glu): step 1/2. In terms of biological role, catalyzes the NADPH-dependent reduction of glutamyl-tRNA(Glu) to glutamate 1-semialdehyde (GSA). In Geotalea daltonii (strain DSM 22248 / JCM 15807 / FRC-32) (Geobacter daltonii), this protein is Glutamyl-tRNA reductase.